Reading from the N-terminus, the 153-residue chain is Transcription antitermination protein NusB (153 aa).

This sequence belongs to the NusB family.

In terms of biological role, involved in transcription antitermination. Required for transcription of ribosomal RNA (rRNA) genes. Binds specifically to the boxA antiterminator sequence of the ribosomal RNA (rrn) operons. The polypeptide is Transcription antitermination protein NusB (Nitratidesulfovibrio vulgaris (strain ATCC 29579 / DSM 644 / CCUG 34227 / NCIMB 8303 / VKM B-1760 / Hildenborough) (Desulfovibrio vulgaris)).